Consider the following 418-residue polypeptide: MTEETHPDDDSYIVRVKAVVMTRDDSSGGWFPQEGGGISRVGVCKVMHPEGNGRSGFLIHGERQKDKLVVLECYVRKDLVYTKANPTFHHWKVDNRKFGLTFQSPADARAFDRGVRKAIEDLIEGSTTSSSTIHNEAELGDDDVFTTATDSSSNSSQKREQPTRTISSPTSCEHRRIYTLGHLHDSYPTDHYHLDQPMPRPYRQVSFPDDDEEIVRINPREKIWMTGYEDYRHAPVRGKYPDPSEDADSSYVRFAKGEVPKHDYNYPYVDSSDFGLGEDPKGRGGSVIKTQPSRGKSRRRKEDGERSRCVYCRDMFNHEENRRGHCQDAPDSVRTCIRRVSCMWCADSMLYHCMSDPEGDYTDPCSCDTSDEKFCLRWMALIALSFLAPCMCCYLPLRACYHCGVMCRCCGGKHKAAA.

Residues 5–122 (THPDDDSYIV…RGVRKAIEDL (118 aa)) enclose the WH1 domain. A disordered region spans residues 127–171 (TTSSSTIHNEAELGDDDVFTTATDSSSNSSQKREQPTRTISSPTS). Residues 146-156 (TTATDSSSNSS) show a composition bias toward polar residues. A KBD domain is found at 201–257 (PYRQVSFPDDDEEIVRINPREKIWMTGYEDYRHAPVRGKYPDPSEDADSSYVRFAKG). At Ser-206 the chain carries Phosphoserine. Phosphotyrosine occurs at positions 228 and 231. Residues 275–302 (GLGEDPKGRGGSVIKTQPSRGKSRRRKE) form a disordered region. An SPR domain is found at 308-416 (RCVYCRDMFN…CRCCGGKHKA (109 aa)).

Homodimer and heterodimer. Able to interact with SPRED1 to form heterodimers. Interacts with RAS. May interact with ZDHHC13 (via ANK repeats) and ZDHHC17 (via ANK repeats). Interacts with TESK1. Interacts with NF1. In terms of processing, phosphorylated on serine and threonine residues. Phosphorylated on tyrosine. Phosphorylation of Tyr-228 and Tyr-231 are required for ubiquitination. Post-translationally, ubiquitinated; leading to degradation by the proteasome. In terms of tissue distribution, expressed in liver, skin, small intestine, salivary gland and prostate.

It is found in the cell membrane. Its subcellular location is the cytoplasmic vesicle. It localises to the secretory vesicle membrane. The protein resides in the cytoplasm. Functionally, negatively regulates Ras signaling pathways and downstream activation of MAP kinases. Recruits and translocates NF1 to the cell membrane, thereby enabling NF1-dependent hydrolysis of active GTP-bound Ras to inactive GDP-bound Ras. Inhibits fibroblast growth factor (FGF)-induced retinal lens fiber differentiation, probably by inhibiting FGF-mediated phosphorylation of ERK1/2. Inhibits TGFB-induced epithelial-to-mesenchymal transition in lens epithelial cells. In Homo sapiens (Human), this protein is Sprouty-related, EVH1 domain-containing protein 2 (SPRED2).